Reading from the N-terminus, the 356-residue chain is sn-glycerol-3-phosphate import ATP-binding protein UgpC (356 aa).

Residues 4 to 235 form the ABC transporter domain; the sequence is LKLQAVTKSW…PASLFVASFI (232 aa). Residue 37–44 participates in ATP binding; that stretch reads GPSGCGKS.

Belongs to the ABC transporter superfamily. sn-glycerol-3-phosphate importer (TC 3.A.1.1.3) family. As to quaternary structure, the complex is composed of two ATP-binding proteins (UgpC), two transmembrane proteins (UgpA and UgpE) and a solute-binding protein (UgpB).

It localises to the cell inner membrane. It carries out the reaction sn-glycerol 3-phosphate(out) + ATP + H2O = sn-glycerol 3-phosphate(in) + ADP + phosphate + H(+). Its function is as follows. Part of the ABC transporter complex UgpBAEC involved in sn-glycerol-3-phosphate (G3P) import. Responsible for energy coupling to the transport system. In Escherichia coli O157:H7, this protein is sn-glycerol-3-phosphate import ATP-binding protein UgpC.